A 142-amino-acid polypeptide reads, in one-letter code: Large ribosomal subunit protein uL11 (142 aa).

Belongs to the universal ribosomal protein uL11 family. As to quaternary structure, part of the ribosomal stalk of the 50S ribosomal subunit. Interacts with L10 and the large rRNA to form the base of the stalk. L10 forms an elongated spine to which L12 dimers bind in a sequential fashion forming a multimeric L10(L12)X complex. In terms of processing, one or more lysine residues are methylated.

In terms of biological role, forms part of the ribosomal stalk which helps the ribosome interact with GTP-bound translation factors. This chain is Large ribosomal subunit protein uL11, found in Bradyrhizobium sp. (strain ORS 278).